The chain runs to 545 residues: Chaperonin GroEL 1 (545 aa).

Residues 29–32 (TLGP), 86–90 (DGTTT), Gly413, 479–481 (DAA), and Asp495 contribute to the ATP site. Residues 525–545 (PEPKENNPAGSGAGMGGDFDY) are disordered. Over residues 535–545 (SGAGMGGDFDY) the composition is skewed to gly residues.

This sequence belongs to the chaperonin (HSP60) family. Forms a cylinder of 14 subunits composed of two heptameric rings stacked back-to-back. Interacts with the co-chaperonin GroES.

Its subcellular location is the cytoplasm. It carries out the reaction ATP + H2O + a folded polypeptide = ADP + phosphate + an unfolded polypeptide.. In terms of biological role, together with its co-chaperonin GroES, plays an essential role in assisting protein folding. The GroEL-GroES system forms a nano-cage that allows encapsulation of the non-native substrate proteins and provides a physical environment optimized to promote and accelerate protein folding. This is Chaperonin GroEL 1 from Thermostichus vulcanus (Synechococcus vulcanus).